The following is a 247-amino-acid chain: Ubiquinone biosynthesis O-methyltransferase (247 aa).

Residues arginine 39, glycine 70, aspartate 91, and methionine 134 each coordinate S-adenosyl-L-methionine.

Belongs to the methyltransferase superfamily. UbiG/COQ3 family.

The enzyme catalyses a 3-demethylubiquinol + S-adenosyl-L-methionine = a ubiquinol + S-adenosyl-L-homocysteine + H(+). It carries out the reaction a 3-(all-trans-polyprenyl)benzene-1,2-diol + S-adenosyl-L-methionine = a 2-methoxy-6-(all-trans-polyprenyl)phenol + S-adenosyl-L-homocysteine + H(+). The protein operates within cofactor biosynthesis; ubiquinone biosynthesis. Functionally, O-methyltransferase that catalyzes the 2 O-methylation steps in the ubiquinone biosynthetic pathway. This chain is Ubiquinone biosynthesis O-methyltransferase, found in Cereibacter sphaeroides (strain ATCC 17029 / ATH 2.4.9) (Rhodobacter sphaeroides).